Reading from the N-terminus, the 178-residue chain is ATP-dependent protease subunit HslV (178 aa).

Thr7 is a catalytic residue. Residues Gly162, Cys165, and Thr168 each coordinate Na(+).

It belongs to the peptidase T1B family. HslV subfamily. As to quaternary structure, a double ring-shaped homohexamer of HslV is capped on each side by a ring-shaped HslU homohexamer. The assembly of the HslU/HslV complex is dependent on binding of ATP.

It localises to the cytoplasm. The enzyme catalyses ATP-dependent cleavage of peptide bonds with broad specificity.. Its activity is regulated as follows. Allosterically activated by HslU binding. Its function is as follows. Protease subunit of a proteasome-like degradation complex believed to be a general protein degrading machinery. This is ATP-dependent protease subunit HslV from Burkholderia ambifaria (strain ATCC BAA-244 / DSM 16087 / CCUG 44356 / LMG 19182 / AMMD) (Burkholderia cepacia (strain AMMD)).